The sequence spans 409 residues: MAAAERLSAAQETQMTLLEKPSFDLKDHISYYGALRTENTIFYAARKKGLTSLGHCPVPTLATAAANAKAAIEMQLLLKDLLRSPFAKNDWSLNDVSHERYKAPPSDTLKRKPRIVEVIFDKDPQNKTWYTLWDEVYVCTVDGWTLTTSGADATGIFVNMQGSRQYYELFGEDAQRFGTSGTWEVIDQNQRFHFPPSSRADTTDGLPGLQEEPRGGDGPTCSGPAPAIPDSPSRCLSRGFAGRDPGCHRNRHRVHPYILSGGQRILVTSSSSSTVQGPLSSGSSQHSQSRGRPPSPDSTETERARTPVNSDRQRAGEFDLLKGGCRPCCLIEGNGNKVKCLRFRLKKSHRSRFLDITTTFWATGDEGSDRQGNGTILITFTDTTQRDLFLGSVSIPGELSVRRITISTD.

Residues 1–199 (MAAAERLSAA…QRFHFPPSSR (199 aa)) form a transactivation domain region. Disordered regions lie at residues 192–251 (FHFP…HRNR) and 269–315 (SSSS…RQRA). Residues 276 to 292 (QGPLSSGSSQHSQSRGR) show a composition bias toward low complexity. Over residues 300–315 (ETERARTPVNSDRQRA) the composition is skewed to basic and acidic residues. The tract at residues 325-409 (CRPCCLIEGN…SVRRITISTD (85 aa)) is DNA-binding domain.

Belongs to the papillomaviridae E2 protein family. Binds DNA as homodimer. Interacts with protein E1; this interaction greatly increases E1 DNA-binding activity. Interacts with protein L1; this interaction enhances E2-dependent replication and transcription activation. Interacts with protein L2; this interaction inhibits E2 transcriptional activity but not DNA replication function E2. Interacts with protein E7; this interaction inhibits E7 oncogenic activity. Interacts with host TAF1; this interaction modulates E2-dependent transcriptional regulation. Interacts with host BRD4; this interaction mediates E2 transcriptional activation function. Additionally, the interaction with host BRD4 on mitotic chromosomes mediates tethering of the viral genome. Interacts with host TOPBP1; this interaction is required for optimal viral DNA replication. In terms of processing, phosphorylated.

Its subcellular location is the host nucleus. Functionally, plays a role in the initiation of viral DNA replication. A dimer of E2 interacts with a dimer of E1 in order to improve specificity of E1 DNA binding activity. Once the complex recognizes and binds DNA at specific sites, the E2 dimer is removed from DNA. E2 also regulates viral transcription through binding to the E2RE response element (5'-ACCNNNNNNGGT-3') present in multiple copies in the regulatory regions of the viral genome. Activates or represses transcription depending on E2RE's position with regards to proximal promoter elements including the TATA-box. Repression occurs by sterically hindering the assembly of the transcription initiation complex. The protein is Regulatory protein E2 of Bovine papillomavirus type 5.